Consider the following 436-residue polypeptide: 3-ketoacyl-CoA thiolase (436 aa).

The Acyl-thioester intermediate role is filled by Cys99. Residues His392 and Cys422 each act as proton acceptor in the active site.

Belongs to the thiolase-like superfamily. Thiolase family. Heterotetramer of two alpha chains (FadJ) and two beta chains (FadI).

The protein localises to the cytoplasm. The enzyme catalyses an acyl-CoA + acetyl-CoA = a 3-oxoacyl-CoA + CoA. It participates in lipid metabolism; fatty acid beta-oxidation. Catalyzes the final step of fatty acid oxidation in which acetyl-CoA is released and the CoA ester of a fatty acid two carbons shorter is formed. This is 3-ketoacyl-CoA thiolase from Escherichia coli O127:H6 (strain E2348/69 / EPEC).